The sequence spans 100 residues: DNA base-flipping protein (100 aa).

The protein belongs to the MGMT family. ATL subfamily.

Functionally, involved in DNA damage recognition. Binds DNA containing O(6)-methylguanine. Binds to the damaged base and flips the base out of the DNA duplex into an extrahelical conformation, which allows processing by repair proteins. This Vibrio parahaemolyticus serotype O3:K6 (strain AQ3810) protein is DNA base-flipping protein.